A 260-amino-acid polypeptide reads, in one-letter code: UPF0246 protein Bxeno_A1262 (260 aa).

This sequence belongs to the UPF0246 family.

In Paraburkholderia xenovorans (strain LB400), this protein is UPF0246 protein Bxeno_A1262.